The following is a 171-amino-acid chain: ATP synthase subunit b (171 aa).

Residues 2-22 (FVVKMVLGFLILLSPLCATGL) traverse the membrane as a helical segment.

The protein belongs to the ATPase B chain family. In terms of assembly, F-type ATPases have 2 components, F(1) - the catalytic core - and F(0) - the membrane proton channel. F(1) has five subunits: alpha(3), beta(3), gamma(1), delta(1), epsilon(1). F(0) has three main subunits: a(1), b(2) and c(10-14). The alpha and beta chains form an alternating ring which encloses part of the gamma chain. F(1) is attached to F(0) by a central stalk formed by the gamma and epsilon chains, while a peripheral stalk is formed by the delta and b chains.

Its subcellular location is the cell inner membrane. Its function is as follows. F(1)F(0) ATP synthase produces ATP from ADP in the presence of a proton or sodium gradient. F-type ATPases consist of two structural domains, F(1) containing the extramembraneous catalytic core and F(0) containing the membrane proton channel, linked together by a central stalk and a peripheral stalk. During catalysis, ATP synthesis in the catalytic domain of F(1) is coupled via a rotary mechanism of the central stalk subunits to proton translocation. Component of the F(0) channel, it forms part of the peripheral stalk, linking F(1) to F(0). The chain is ATP synthase subunit b from Helicobacter pylori (strain J99 / ATCC 700824) (Campylobacter pylori J99).